The primary structure comprises 85 residues: U4-theraphotoxin-Hhn1a (85 aa).

Positions 1–22 (MKMTLIAILTCAAVLVLHTTAA) are cleaved as a signal peptide. A propeptide spanning residues 23–48 (EELEAESQLMEVGMPDTELAAVDEER) is cleaved from the precursor. Cystine bridges form between Cys-52-Cys-66, Cys-56-Cys-77, and Cys-71-Cys-82.

It belongs to the neurotoxin 12 (Hwtx-2) family. 02 (Hwtx-2) subfamily. As to quaternary structure, monomer. Expressed by the venom gland.

The protein localises to the secreted. Functionally, neurotoxin active on both insects and mammals. In Cyriopagopus hainanus (Chinese bird spider), this protein is U4-theraphotoxin-Hhn1a.